A 350-amino-acid chain; its full sequence is NADH-quinone oxidoreductase subunit H (350 aa).

8 helical membrane-spanning segments follow: residues 31 to 51 (LMLLAVVGVLAFLFLNALFLI), 102 to 122 (LLAPVLIFTIPVMLFLVIPFG), 132 to 152 (LGVLYLVAITSVETIVLWMAG), 171 to 191 (MLSYEMPVILAMLSVVMMAGS), 205 to 225 (WFIFLQPVGFLIYFIAVNAEF), 263 to 283 (FMIGAIMVTTLFLGGWNAPFG), 286 to 306 (FIPSWLWFIIKMYFVITLYMW), and 322 to 342 (FAWKFLLPVSLANIFITGFGL).

Belongs to the complex I subunit 1 family. In terms of assembly, NDH-1 is composed of 14 different subunits. Subunits NuoA, H, J, K, L, M, N constitute the membrane sector of the complex.

It is found in the cell membrane. The enzyme catalyses a quinone + NADH + 5 H(+)(in) = a quinol + NAD(+) + 4 H(+)(out). Its function is as follows. NDH-1 shuttles electrons from NADH, via FMN and iron-sulfur (Fe-S) centers, to quinones in the respiratory chain. The immediate electron acceptor for the enzyme in this species is believed to be ubiquinone. Couples the redox reaction to proton translocation (for every two electrons transferred, four hydrogen ions are translocated across the cytoplasmic membrane), and thus conserves the redox energy in a proton gradient. This subunit may bind ubiquinone. This is NADH-quinone oxidoreductase subunit H from Carboxydothermus hydrogenoformans (strain ATCC BAA-161 / DSM 6008 / Z-2901).